Here is a 153-residue protein sequence, read N- to C-terminus: Myosin regulatory light chain (153 aa).

Residue Ala1 is modified to Blocked amino end (Ala). 2 EF-hand domains span residues 15 to 50 (KQIQEMKEAFSMIDVDRDGFVSKDDIKAISEQLGRT) and 81 to 116 (DSEETIRNAFAMFDEQENKKLNIEYIKDLLEDMGNN). 4 residues coordinate Ca(2+): Asp28, Asp30, Asp32, and Asp39.

Functionally, in molluscan muscle, calcium regulation is associated with myosin rather than with actin. Muscle myosin contains two types of light chains: the catalytic light chain, essential for ATPase activity, and the regulatory light chain, a calcium-binding protein responsible for Ca(2+) dependent binding and Ca(2+) dependent Mg-ATPase activity. This Patinopecten sp. (Scallop) protein is Myosin regulatory light chain.